Here is a 583-residue protein sequence, read N- to C-terminus: Thiol:disulfide interchange protein DsbD (583 aa).

The first 18 residues, methionine 1–alanine 18, serve as a signal peptide directing secretion. Intrachain disulfides connect cysteine 118–cysteine 124 and cysteine 186–cysteine 306. The next 8 membrane-spanning stretches (helical) occupy residues glycine 168–leucine 188, serine 214–glycine 234, tryptophan 245–phenylalanine 265, leucine 289–alanine 309, phenylalanine 326–valine 346, tryptophan 359–leucine 379, valine 382–cysteine 402, and leucine 413–valine 433. The Thioredoxin domain maps to valine 458 to glutamate 581. The cysteines at positions 496 and 499 are disulfide-linked.

Belongs to the thioredoxin family. DsbD subfamily.

It is found in the cell inner membrane. The enzyme catalyses [protein]-dithiol + NAD(+) = [protein]-disulfide + NADH + H(+). It carries out the reaction [protein]-dithiol + NADP(+) = [protein]-disulfide + NADPH + H(+). Required to facilitate the formation of correct disulfide bonds in some periplasmic proteins and for the assembly of the periplasmic c-type cytochromes. Acts by transferring electrons from cytoplasmic thioredoxin to the periplasm. This transfer involves a cascade of disulfide bond formation and reduction steps. This chain is Thiol:disulfide interchange protein DsbD, found in Pseudomonas fluorescens (strain ATCC BAA-477 / NRRL B-23932 / Pf-5).